A 177-amino-acid polypeptide reads, in one-letter code: Nuclear export protein (177 aa).

2 consecutive short sequence motifs (nuclear export signal) follow at residues Leu-91–Leu-100 and Met-117–Leu-127.

Binds M1 protein. May interact with human nucleoporins and exportin XPO1/CRM1.

It localises to the virion. The protein resides in the host nucleus. Its function is as follows. Mediates the nuclear export of encapsidated genomic RNAs (ribonucleoproteins, RNPs). Acts as an adapter between viral RNPs complexes and the nuclear export machinery of the cell. Possesses no intrinsic RNA-binding activity, but includes a C-terminal M1-binding domain. This domain is believed to allow recognition of RNPs to which the M1 protein is bound. Because the M1 protein is not available in large quantities until the later stages of infection, such an indirect recognition mechanism probably ensures that genomic RNPs are not exported from the nucleus before sufficient quantities of viral mRNA and progeny genomic RNA have been synthesized. Furthermore, the RNPs enters the cytoplasm only when they have associated with the M1 protein that is necessary to guide them to the plasma membrane. May down-regulate viral RNA synthesis when overproduced. The polypeptide is Nuclear export protein (NS) (Homo sapiens (Human)).